A 170-amino-acid polypeptide reads, in one-letter code: Brassinosteroid-responsive RING protein 1 (170 aa).

Residues 15-37 (LFVQTLSILGFIRTIVFSIFRFL) form a helical membrane-spanning segment. The segment at 94 to 137 (CAVCLYEFEGEQEIRWLRNCRHIFHRSCLDRWMDHDQKTCPLCR) adopts an RING-type; atypical zinc-finger fold.

The protein belongs to the RING-type zinc finger family. Highly expressed in stems, rosette leaves and siliques, and moderately expressed in roots, cauline leaves and flower. Detected at low levels in seeds.

It localises to the membrane. Functionally, may be involved in the brassinosteroids (BRs) signaling pathway and regulate the growth and development of rosette leaves. Seems to prevent over development of leaves and inflorescence stems. The sequence is that of Brassinosteroid-responsive RING protein 1 from Arabidopsis thaliana (Mouse-ear cress).